Here is a 199-residue protein sequence, read N- to C-terminus: Gamma-glutamylcyclotransferase 2-3 (199 aa).

5–10 lines the substrate pocket; it reads VFGYGS. Glu86 functions as the Proton acceptor in the catalytic mechanism.

It belongs to the gamma-glutamylcyclotransferase family. Mn(2+) serves as cofactor.

It is found in the cytoplasm. The enzyme catalyses glutathione = L-cysteinylglycine + 5-oxo-L-proline. Its function is as follows. Converts GSH to 5-oxoproline and cysteine-glycine (Cys-Gly) dipeptide in vitro and plays a significant role in glutathione (GSH) homeostasis. Has no activity towards gamma-glutamyl-L-cysteine but possesses very low activity towards gamma-glutamyl-L-alanine. The polypeptide is Gamma-glutamylcyclotransferase 2-3 (Arabidopsis thaliana (Mouse-ear cress)).